The following is a 236-amino-acid chain: Orotidine 5'-phosphate decarboxylase (236 aa).

Substrate contacts are provided by residues Asp17, Lys39, 66–75 (DLKFHDIPNT), Thr125, Arg186, Gln195, Gly215, and Arg216. Lys68 serves as the catalytic Proton donor.

It belongs to the OMP decarboxylase family. Type 1 subfamily. In terms of assembly, homodimer.

The enzyme catalyses orotidine 5'-phosphate + H(+) = UMP + CO2. Its pathway is pyrimidine metabolism; UMP biosynthesis via de novo pathway; UMP from orotate: step 2/2. In terms of biological role, catalyzes the decarboxylation of orotidine 5'-monophosphate (OMP) to uridine 5'-monophosphate (UMP). The protein is Orotidine 5'-phosphate decarboxylase of Buchnera aphidicola subsp. Schizaphis graminum (strain Sg).